The sequence spans 383 residues: Protein delta homolog 1 (383 aa).

Positions 1-23 (MTATEALLRVLLLLLAFGHSTYG) are cleaved as a signal peptide. 6 EGF-like domains span residues 24–55 (AECF…PLCD), 53–86 (LCDQ…ELCD), 88–125 (DVRA…KDCQ), 127–168 (KDGP…NFCE), 170–206 (VANS…KTCS), and 208–245 (PVTN…LTCV). The Extracellular portion of the chain corresponds to 24-303 (AECFPACNPQ…KKTPLLTEGQ (280 aa)). Cystine bridges form between cysteine 26-cysteine 37, cysteine 30-cysteine 43, cysteine 45-cysteine 54, cysteine 57-cysteine 68, cysteine 63-cysteine 74, cysteine 76-cysteine 85, cysteine 92-cysteine 103, cysteine 97-cysteine 113, cysteine 115-cysteine 124, cysteine 131-cysteine 144, cysteine 138-cysteine 156, and cysteine 158-cysteine 167. Serine 94 carries O-linked (GalNAc...) serine glycosylation. A glycan (N-linked (GlcNAc...) asparagine) is linked at asparagine 100. Residue threonine 143 is glycosylated (O-linked (GalNAc...) threonine). O-linked (GalNAc...) serine; partial glycosylation is present at serine 163. Asparagine 165 and asparagine 172 each carry an N-linked (GlcNAc...) asparagine; atypical; partial glycan. Intrachain disulfides connect cysteine 174/cysteine 185, cysteine 179/cysteine 194, cysteine 196/cysteine 205, cysteine 212/cysteine 223, cysteine 217/cysteine 233, and cysteine 235/cysteine 244. A glycan (O-linked (GalNAc...) serine) is linked at serine 214. Threonine 222 is a glycosylation site (O-linked (GalNAc...) threonine; partial). Serine 251 carries an O-linked (GalNAc...) serine; partial glycan. Residue threonine 256 is glycosylated (O-linked (GalNAc...) threonine). Serine 260 is a glycosylation site (O-linked (GalNAc...) serine; partial). The chain crosses the membrane as a helical span at residues 304 to 327 (AICFTILGVLTSLVVLGTVGIVFL). At 328-383 (NKCETWVSNLRYNHMLRKKKNLLLQYNSGEDLAVNIIFPEKIDMTTFSKEAGDEEI) the chain is on the cytoplasmic side.

Monomer. Interacts with SH3RF2. Post-translationally, N- and O-glycosylated. O-glycosylated with core 1 or possibly core 8 glycans. As to expression, found within the stromal cells in close contact to the vascular structure of placental villi, yolk sac, fetal liver, adrenal cortex and pancreas and in the beta cells of the islets of Langerhans in the adult pancreas. Found also in some forms of neuroendocrine lung tumor tissue.

The protein localises to the membrane. Its subcellular location is the cytoplasm. In terms of biological role, may have a role in neuroendocrine differentiation. This is Protein delta homolog 1 (DLK1) from Homo sapiens (Human).